The following is a 94-amino-acid chain: Large ribosomal subunit protein uL23 (94 aa).

It belongs to the universal ribosomal protein uL23 family. Part of the 50S ribosomal subunit. Contacts protein L29, and trigger factor when it is bound to the ribosome.

One of the early assembly proteins it binds 23S rRNA. One of the proteins that surrounds the polypeptide exit tunnel on the outside of the ribosome. Forms the main docking site for trigger factor binding to the ribosome. This is Large ribosomal subunit protein uL23 from Geobacter sp. (strain M21).